We begin with the raw amino-acid sequence, 327 residues long: Inactive peptidyl-prolyl cis-trans isomerase FKBP6 (327 aa).

The PPIase FKBP-type domain occupies 54-143 (DASVLVKYSG…LFEIELLDFL (90 aa)). TPR repeat units lie at residues 171–204 (AATEREFGNYLFRQNRFYDAKVRYKRALLLLRRR), 219–252 (LPVLLNLSFTYLKLDRPTIALCYGEQALIIDQKN), and 253–286 (AKALFRCGQACLLLTEYQKARDFLVRAQKEQPFN).

It belongs to the FKBP6 family. In terms of assembly, interacts (via TPR repeats) with HSP90. Interacts with HSP72/HSPA2 and CLTC. Interacts with GAPDH; leading to inhibit GAPDH catalytic activity. As to expression, detected in all tissues examined, with higher expression in testis, heart, skeletal muscle, liver, and kidney.

The protein localises to the cytoplasm. It localises to the nucleus. In terms of biological role, has an essential role in spermatogenesis. It is required to repress transposable elements and prevent their mobilization, which is essential for the germline integrity. Acts via the piRNA metabolic process, which mediates the repression of transposable elements during meiosis by forming complexes composed of piRNAs and Piwi proteins and govern the methylation and subsequent repression of transposons. Acts as a co-chaperone via its interaction with HSP90 and is required for the piRNA amplification process, the secondary piRNA biogenesis. May be required together with HSP90 in removal of 16 nucleotide ping-pong by-products from Piwi complexes, possibly facilitating turnover of Piwi complexes. The polypeptide is Inactive peptidyl-prolyl cis-trans isomerase FKBP6 (FKBP6) (Homo sapiens (Human)).